The chain runs to 571 residues: Polypeptide N-acetylgalactosaminyltransferase 2 (571 aa).

Residues 1 to 6 (MRRRSR) are Cytoplasmic-facing. Residues 7 to 24 (MLLCFAFLWVLGIAYYMY) form a helical; Signal-anchor for type II membrane protein membrane-spanning segment. At 25-571 (SGGGSALAGG…QWKFTLNLQQ (547 aa)) the chain is on the lumenal side. O-linked (Xyl...) (chondroitin sulfate) serine glycosylation is present at serine 29. The span at 53 to 66 (KKDLHHSNGEEKAQ) shows a compositional bias: basic and acidic residues. The interval 53–74 (KKDLHHSNGEEKAQSMETLPPG) is disordered. 4 disulfides stabilise this stretch: cysteine 126-cysteine 354, cysteine 345-cysteine 423, cysteine 456-cysteine 473, and cysteine 496-cysteine 513. Positions 135–240 (LPATSVVITF…EHWLEPLLER (106 aa)) are catalytic subdomain A. Substrate contacts are provided by threonine 143, aspartate 176, and arginine 201. Aspartate 224 lines the Mn(2+) pocket. Substrate is bound at residue serine 225. Histidine 226 provides a ligand contact to Mn(2+). Residues 300–362 (PIKTPMIAGG…PCSRVGHVFR (63 aa)) form a catalytic subdomain B region. Tryptophan 331 serves as a coordination point for substrate. A Mn(2+)-binding site is contributed by histidine 359. Substrate-binding residues include arginine 362, histidine 365, and tyrosine 367. A Ricin B-type lectin domain is found at 443–566 (QDIAFGALQQ…PALSQQWKFT (124 aa)). Phosphoserine is present on serine 536. A disulfide bridge links cysteine 539 with cysteine 555.

Belongs to the glycosyltransferase 2 family. GalNAc-T subfamily. The cofactor is Mn(2+). As to expression, detected in urine (at protein level). Widely expressed.

The protein localises to the golgi apparatus. Its subcellular location is the golgi stack membrane. The protein resides in the secreted. The catalysed reaction is L-seryl-[protein] + UDP-N-acetyl-alpha-D-galactosamine = a 3-O-[N-acetyl-alpha-D-galactosaminyl]-L-seryl-[protein] + UDP + H(+). It carries out the reaction L-threonyl-[protein] + UDP-N-acetyl-alpha-D-galactosamine = a 3-O-[N-acetyl-alpha-D-galactosaminyl]-L-threonyl-[protein] + UDP + H(+). The protein operates within protein modification; protein glycosylation. Functionally, catalyzes the initial reaction in O-linked oligosaccharide biosynthesis, the transfer of an N-acetyl-D-galactosamine residue to a serine or threonine residue on the protein receptor. Has a broad spectrum of substrates for peptides such as EA2, Muc5AC, Muc1a, Muc1b. Probably involved in O-linked glycosylation of the immunoglobulin A1 (IgA1) hinge region. Involved in O-linked glycosylation of APOC-III, ANGPTL3 and PLTP. It participates in the regulation of HDL-C metabolism. This is Polypeptide N-acetylgalactosaminyltransferase 2 (GALNT2) from Homo sapiens (Human).